The sequence spans 134 residues: Phosphoribosyl-AMP cyclohydrolase (134 aa).

Residue D80 participates in Mg(2+) binding. C81 contacts Zn(2+). Positions 82 and 84 each coordinate Mg(2+). Residues C98 and C105 each coordinate Zn(2+).

This sequence belongs to the PRA-CH family. In terms of assembly, homodimer. Mg(2+) serves as cofactor. Requires Zn(2+) as cofactor.

It localises to the cytoplasm. The catalysed reaction is 1-(5-phospho-beta-D-ribosyl)-5'-AMP + H2O = 1-(5-phospho-beta-D-ribosyl)-5-[(5-phospho-beta-D-ribosylamino)methylideneamino]imidazole-4-carboxamide. The protein operates within amino-acid biosynthesis; L-histidine biosynthesis; L-histidine from 5-phospho-alpha-D-ribose 1-diphosphate: step 3/9. Catalyzes the hydrolysis of the adenine ring of phosphoribosyl-AMP. This chain is Phosphoribosyl-AMP cyclohydrolase, found in Herminiimonas arsenicoxydans.